A 277-amino-acid chain; its full sequence is Uridine-cytidine kinase 1 (277 aa).

Residues 1–30 (MASAGGGGSESAAPEADRPQPRPFLIGVSG) are disordered. 30–38 (GGTASGKST) serves as a coordination point for ATP. Residues D87, Y115, H120, R169, R178, and Q186 each contribute to the substrate site. Residue D215 participates in ATP binding. Positions 238–250 (RHRGGPNGRNHKR) are enriched in basic residues. The interval 238 to 277 (RHRGGPNGRNHKRTFPEPGDHPGVLATGKRSHLESSSRPH) is disordered. Position 251 is a phosphothreonine (T251). Positions 268 to 277 (SHLESSSRPH) are enriched in basic and acidic residues.

Belongs to the uridine kinase family.

It catalyses the reaction uridine + ATP = UMP + ADP + H(+). The catalysed reaction is cytidine + ATP = CMP + ADP + H(+). It participates in pyrimidine metabolism; CTP biosynthesis via salvage pathway; CTP from cytidine: step 1/3. The protein operates within pyrimidine metabolism; UMP biosynthesis via salvage pathway; UMP from uridine: step 1/1. Functionally, phosphorylates uridine and cytidine to uridine monophosphate and cytidine monophosphate. Does not phosphorylate deoxyribonucleosides or purine ribonucleosides. Can use ATP or GTP as a phosphate donor. This Mus musculus (Mouse) protein is Uridine-cytidine kinase 1 (Uck1).